The sequence spans 353 residues: BLOC-1-related complex subunit 6 (353 aa).

The interval 23–194 is disordered; that stretch reads AIFGDGPGQT…SGAGGGRRAT (172 aa). The span at 102 to 126 shows a compositional bias: basic and acidic residues; sequence FDLHGSSRRKDPEPPEAKPESERVC. Phosphoserine occurs at positions 130 and 166. Residues 172–191 are compositionally biased toward gly residues; the sequence is GACGGPASSGGAESGAGGGR. Threonine 194 is subject to Phosphothreonine. The residue at position 197 (serine 197) is a Phosphoserine. Residues 225–253 are disordered; the sequence is LSGAPQPPPPAPTRPCSAPTPTPAIPPID. Residues 229-253 are compositionally biased toward pro residues; the sequence is PQPPPPAPTRPCSAPTPTPAIPPID.

Belongs to the BORCS6 family. In terms of assembly, component of the BLOC-one-related complex (BORC) which is composed of BLOC1S1, BLOC1S2, BORCS5, BORCS6, BORCS7, BORCS8, KXD1 and SNAPIN.

It localises to the lysosome membrane. Its function is as follows. As part of the BORC complex may play a role in lysosomes movement and localization at the cell periphery. Associated with the cytosolic face of lysosomes, the BORC complex may recruit ARL8B and couple lysosomes to microtubule plus-end-directed kinesin motor. The polypeptide is BLOC-1-related complex subunit 6 (Bos taurus (Bovine)).